The chain runs to 520 residues: Cyclic AMP-responsive element-binding protein 3-like protein 2 (520 aa).

Over Met-1–Thr-378 the chain is Cytoplasmic. Ser-93 carries the post-translational modification Phosphoserine. Lys-178 is covalently cross-linked (Glycyl lysine isopeptide (Lys-Gly) (interchain with G-Cter in SUMO2)). Phosphoserine is present on Ser-191. The disordered stretch occupies residues Ala-195 to Leu-264. Low complexity-rich tracts occupy residues Ser-208 to Pro-220 and Ser-234 to Pro-255. The bZIP domain maps to Ala-294 to Leu-357. Residues Lys-296–Lys-325 are basic motif. The segment at Leu-336–Leu-357 is leucine-zipper. A helical; Signal-anchor for type II membrane protein transmembrane segment spans residues Cys-379–Gly-399. The Lumenal portion of the chain corresponds to Pro-400–Phe-520. An S1P recognition motif is present at residues Arg-427–Leu-430. Asn-480, Asn-504, and Asn-517 each carry an N-linked (GlcNAc...) asparagine glycan.

Belongs to the bZIP family. ATF subfamily. In terms of assembly, binds DNA as a dimer. Upon ER stress, translocated to the Golgi apparatus, where it is processed by regulated intramembrane proteolysis (RIP) to release the cytosol-facing N-terminal transcription factor domain. The cleavage is performed sequentially by site-1 and site-2 proteases (S1P/MBTPS1 and S2P/MBTPS2). In terms of processing, N-glycosylated. Post-translationally, ubiquitinated by HRD1/SYVN1; undergoes 'Lys-48'-linked ubiquitination, followed by rapid proteasomal degradation under normal conditions. Upon ER stress, SYVN1 E3 ubiquitin-protein ligase dissociates from its substrate, ubiquitination does not occur and CREB3L2 is stabilized.

Its subcellular location is the endoplasmic reticulum membrane. It localises to the nucleus. Its function is as follows. Transcription factor involved in unfolded protein response (UPR). In the absence of endoplasmic reticulum (ER) stress, inserted into ER membranes, with N-terminal DNA-binding and transcription activation domains oriented toward the cytosolic face of the membrane. In response to ER stress, transported to the Golgi, where it is cleaved in a site-specific manner by resident proteases S1P/MBTPS1 and S2P/MBTPS2. The released N-terminal cytosolic domain is translocated to the nucleus to effect transcription of specific target genes. Plays a critical role in chondrogenesis by activating the transcription of SEC23A, which promotes the transport and secretion of cartilage matrix proteins, and possibly that of ER biogenesis-related genes. In a neuroblastoma cell line, protects cells from ER stress-induced death. In vitro activates transcription of target genes via direct binding to the CRE site. The sequence is that of Cyclic AMP-responsive element-binding protein 3-like protein 2 (CREB3L2) from Pongo abelii (Sumatran orangutan).